A 101-amino-acid chain; its full sequence is Salivary thrombin inhibitor anophelin (101 aa).

A signal peptide spans 1-21 (MASKVIVIALLCIALAAFVQG). Residues 26-101 (THGEEPEYDE…SDSSSGSTEN (76 aa)) are disordered. The span at 31–40 (PEYDEDDGAD) shows a compositional bias: acidic residues. The interval 75 to 78 (DPGR) is blocks active site cleft of host thrombin in a reverse direction compared to substrates. The segment covering 75–87 (DPGRRPEFLKQHN) has biased composition (basic and acidic residues). Polar residues predominate over residues 88-101 (NENQSDSSSGSTEN). Asparagine 90 carries N-linked (GlcNAc...) asparagine glycosylation.

The protein belongs to the anophelin family. In terms of assembly, interacts with human F2 (thrombin); the interaction results in thrombin inhibition.

The protein localises to the secreted. Salivary protein with anticoagulant activity that inhibits host thrombin (F2). The sequence is that of Salivary thrombin inhibitor anophelin from Anopheles stephensi (Indo-Pakistan malaria mosquito).